The chain runs to 206 residues: Glycerol-3-phosphate acyltransferase (206 aa).

Helical transmembrane passes span 4–24 (TAFA…AVIV), 53–73 (LAAA…VALA), 86–106 (GIAL…FFGF), 116–136 (VGIL…TWLF), 137–157 (MAFV…LAPV), and 160–180 (FFIL…AIVV).

The protein belongs to the PlsY family. In terms of assembly, probably interacts with PlsX.

The protein resides in the cell inner membrane. It catalyses the reaction an acyl phosphate + sn-glycerol 3-phosphate = a 1-acyl-sn-glycero-3-phosphate + phosphate. The protein operates within lipid metabolism; phospholipid metabolism. Catalyzes the transfer of an acyl group from acyl-phosphate (acyl-PO(4)) to glycerol-3-phosphate (G3P) to form lysophosphatidic acid (LPA). This enzyme utilizes acyl-phosphate as fatty acyl donor, but not acyl-CoA or acyl-ACP. The polypeptide is Glycerol-3-phosphate acyltransferase (Chromobacterium violaceum (strain ATCC 12472 / DSM 30191 / JCM 1249 / CCUG 213 / NBRC 12614 / NCIMB 9131 / NCTC 9757 / MK)).